A 96-amino-acid chain; its full sequence is MITPYNILRHELIGLDVEITQSTNKSLVGLKGKIVYETRNTINIERFDNSKEVMIPKDIAVFKFKLNEEYIEVIGELLMGRPEDRLKRKIKNIYPY.

This sequence belongs to the eukaryotic/archaeal RNase P protein component 1 family. Consists of a catalytic RNA component and at least 4-5 protein subunits.

The protein resides in the cytoplasm. It catalyses the reaction Endonucleolytic cleavage of RNA, removing 5'-extranucleotides from tRNA precursor.. Part of ribonuclease P, a protein complex that generates mature tRNA molecules by cleaving their 5'-ends. The polypeptide is Ribonuclease P protein component 1 (Methanococcus aeolicus (strain ATCC BAA-1280 / DSM 17508 / OCM 812 / Nankai-3)).